Here is a 346-residue protein sequence, read N- to C-terminus: UDP-3-O-acylglucosamine N-acyltransferase (346 aa).

The active-site Proton acceptor is His253.

This sequence belongs to the transferase hexapeptide repeat family. LpxD subfamily. Homotrimer.

It catalyses the reaction a UDP-3-O-[(3R)-3-hydroxyacyl]-alpha-D-glucosamine + a (3R)-hydroxyacyl-[ACP] = a UDP-2-N,3-O-bis[(3R)-3-hydroxyacyl]-alpha-D-glucosamine + holo-[ACP] + H(+). It participates in bacterial outer membrane biogenesis; LPS lipid A biosynthesis. In terms of biological role, catalyzes the N-acylation of UDP-3-O-acylglucosamine using 3-hydroxyacyl-ACP as the acyl donor. Is involved in the biosynthesis of lipid A, a phosphorylated glycolipid that anchors the lipopolysaccharide to the outer membrane of the cell. This chain is UDP-3-O-acylglucosamine N-acyltransferase, found in Rickettsia conorii (strain ATCC VR-613 / Malish 7).